Consider the following 514-residue polypeptide: Importin subunit alpha-3 (514 aa).

One can recognise an IBB domain in the interval 1–51 (MSSNRQAYYKNNAKEQIGKEKRNEEVVSIRKDKREEAISKRRNINTQIEDD). The interval 1–62 (MSSNRQAYYK…ETSTTPPGPF (62 aa)) is disordered. The span at 12–39 (NAKEQIGKEKRNEEVVSIRKDKREEAIS) shows a compositional bias: basic and acidic residues. ARM repeat units follow at residues 101–142 (IDDL…TSEQ), 143–187 (TQAV…FRDY), 188–226 (CLELGILQPLLQFINPEIPIGFLRNVTWVIVNLCRCKDP), 227–271 (APSP…EHIQ), 272–311 (MVIEAQVVTHLVPLLGHVDVKVQTAALRAVGNIVTGTDEQ), 312–353 (TQLV…NQQQ), 354–393 (VQDVFDAGIMPMIIHLLDRGDFPTQKEAAWAISNVTISGR), and 394–436 (PNQV…KMAG). The tract at residues 485–514 (GNVEGAQSSAFGGDVPPVPDAPNGGWNFGK) is disordered.

It belongs to the importin alpha family. In terms of assembly, forms a complex with an importin beta subunit. May interact with transcription factor cebp-1 (via N-terminus). Interacts with cmk-1; affinity for cmk-1 is increased in the presence of Ca(2+) and calmodulin and leads to increased nuclear accumulation of cmk-1 in FLP neurons upon prolonged heat activation. As to expression, expressed in larval and adult germline and somatic tissues, including neurons.

The protein localises to the cytoplasm. It is found in the nucleus. In terms of biological role, binds specifically and directly to substrates containing either a simple or bipartite NLS motif. Promotes docking of import substrates to the nuclear envelope. Seems to act as a cytosolic receptor for both simple and bipartite NLS motifs. Necessary for correct nucleoporin localization within the germline. Essential gene for embryonic and larval development. May be dispensable for axon development, but required for axon regeneration in both mechanosensory and motor neurons. Required for oogenic development, ima-1 and ima-2 cannot functionally compensate for loss of ima-3. The polypeptide is Importin subunit alpha-3 (ima-3) (Caenorhabditis elegans).